A 231-amino-acid chain; its full sequence is Casparian strip membrane protein 1 (231 aa).

Over 1–69 (MSTSETATVI…FRQSDRGSRC (69 aa)) the chain is Cytoplasmic. A helical transmembrane segment spans residues 70-90 (LAFLDFLLRIAAFGPALAAAI). Over 91–117 (ATGTSDETLSVFTEFFQFRARFDDFPA) the chain is Extracellular. A helical membrane pass occupies residues 118–138 (FLFLMVANAIAAGYLVLSLPF). The Cytoplasmic portion of the chain corresponds to 139–152 (SAVVVLRPQATGLR). The helical transmembrane segment at 153–173 (LLLLVCDTIMIGLLTAAAAAA) threads the bilayer. The Extracellular segment spans residues 174–207 (AAIVELAHNGNERANWVAICMQFHGFCQRTSGAV). A helical transmembrane segment spans residues 208–228 (VASFLSVFLFLLLVVLAAFAI). Topologically, residues 229–231 (RKR) are cytoplasmic.

This sequence belongs to the Casparian strip membrane proteins (CASP) family. As to quaternary structure, homodimer and heterodimers.

The protein resides in the cell membrane. Its function is as follows. Regulates membrane-cell wall junctions and localized cell wall deposition. Required for establishment of the Casparian strip membrane domain (CSD) and the subsequent formation of Casparian strips, a cell wall modification of the root endodermis that determines an apoplastic barrier between the intraorganismal apoplasm and the extraorganismal apoplasm and prevents lateral diffusion. The chain is Casparian strip membrane protein 1 from Brachypodium distachyon (Purple false brome).